The chain runs to 267 residues: 3-methyl-2-oxobutanoate hydroxymethyltransferase (267 aa).

2 residues coordinate Mg(2+): Asp-45 and Asp-84. 3-methyl-2-oxobutanoate is bound by residues 45–46, Asp-84, and Lys-113; that span reads DS. Glu-115 serves as a coordination point for Mg(2+). The active-site Proton acceptor is Glu-182.

This sequence belongs to the PanB family. Homodecamer; pentamer of dimers. The cofactor is Mg(2+).

The protein resides in the cytoplasm. The catalysed reaction is 3-methyl-2-oxobutanoate + (6R)-5,10-methylene-5,6,7,8-tetrahydrofolate + H2O = 2-dehydropantoate + (6S)-5,6,7,8-tetrahydrofolate. It functions in the pathway cofactor biosynthesis; coenzyme A biosynthesis. Its function is as follows. Catalyzes the reversible reaction in which hydroxymethyl group from 5,10-methylenetetrahydrofolate is transferred onto alpha-ketoisovalerate to form ketopantoate. The polypeptide is 3-methyl-2-oxobutanoate hydroxymethyltransferase (Saccharolobus islandicus (strain Y.G.57.14 / Yellowstone #1) (Sulfolobus islandicus)).